The chain runs to 53 residues: Ferredoxin B (53 aa).

The interval 1-35 is N-terminal extension; it reads GIDPNYRSLPVVKEEQGVKIYGTYEPPTKLGIWGT. Position 29 is an N6-methyllysine (Lys29). In terms of domain architecture, 4Fe-4S ferredoxin-type 1 spans 34–53; the sequence is GTIVGVDFDLCIADGSCINA. [3Fe-4S] cluster contacts are provided by Cys44 and Cys50.

[3Fe-4S] cluster serves as cofactor. It depends on [4Fe-4S] cluster as a cofactor.

Functionally, ferredoxins are iron-sulfur proteins that transfer electrons in a wide variety of metabolic reactions. The protein is Ferredoxin B of Sulfuracidifex metallicus (Sulfolobus metallicus).